A 137-amino-acid chain; its full sequence is Crustacean hyperglycemic hormones (137 aa).

An N-terminal signal peptide occupies residues 1–28 (MVSFRTMWSLVVVVVVVAASLGSSGVHG). The residue at position 64 (glutamine 64) is a Pyrrolidone carboxylic acid. Position 66 is a D-phenylalanine; in form CHH-II (phenylalanine 66). 3 cysteine pairs are disulfide-bonded: cysteine 70–cysteine 106, cysteine 86–cysteine 102, and cysteine 89–cysteine 115. At valine 135 the chain carries Valine amide.

It belongs to the arthropod CHH/MIH/GIH/VIH hormone family. As to expression, produced by the medulla terminalis X-organ in the eyestalks and transported to the sinus gland where they are stored and released.

The protein localises to the secreted. Its function is as follows. Hormone found in the sinus gland of isopods and decapods which controls the blood sugar level. Has a secretagogue action over the amylase released from the midgut gland. May act as a stress hormone and may be involved in the control of molting and reproduction. The protein is Crustacean hyperglycemic hormones of Procambarus clarkii (Red swamp crayfish).